A 122-amino-acid chain; its full sequence is Large ribosomal subunit protein uL14 (122 aa).

Belongs to the universal ribosomal protein uL14 family. As to quaternary structure, part of the 50S ribosomal subunit. Forms a cluster with proteins L3 and L19. In the 70S ribosome, L14 and L19 interact and together make contacts with the 16S rRNA in bridges B5 and B8.

Functionally, binds to 23S rRNA. Forms part of two intersubunit bridges in the 70S ribosome. This Mycoplasmopsis pulmonis (strain UAB CTIP) (Mycoplasma pulmonis) protein is Large ribosomal subunit protein uL14.